Reading from the N-terminus, the 510-residue chain is Ribonuclease Y (510 aa).

Residues 1–21 (MLIYILSGLGVLVGALLGYVV) form a helical membrane-spanning segment. Positions 200–260 (TVSTIMLPND…LRREIAKRTI (61 aa)) constitute a KH domain. The HD domain occupies 326-419 (VLNHSIEVAL…VAAADALSAA (94 aa)).

It belongs to the RNase Y family.

The protein localises to the cell membrane. Endoribonuclease that initiates mRNA decay. This chain is Ribonuclease Y, found in Thermosipho melanesiensis (strain DSM 12029 / CIP 104789 / BI429).